Consider the following 325-residue polypeptide: mRNA decay factor CTH1 (325 aa).

2 consecutive C3H1-type zinc fingers follow at residues 204–232 and 242–270; these read LYKT…HGLN and NYRT…HGDD. The interval 284–306 is disordered; that stretch reads SKDTALTPLPTSLAPSNNDNITN. Over residues 292 to 306 the composition is skewed to polar residues; sequence LPTSLAPSNNDNITN.

Binds to specific AU-rich elements (ARE) in the 3'-untranslated region of target mRNAs and promotes their degradation. In response to iron deficiency, promotes the decay of many mRNAs encoding proteins involved in iron-dependent pathways. Negatively regulates primarily iron-dependent mitochondrial processes including respiration and amino acid biosynthesis. This Saccharomyces cerevisiae (strain ATCC 204508 / S288c) (Baker's yeast) protein is mRNA decay factor CTH1 (CTH1).